Here is a 176-residue protein sequence, read N- to C-terminus: Large ribosomal subunit protein uL10 (176 aa).

The protein belongs to the universal ribosomal protein uL10 family. In terms of assembly, part of the ribosomal stalk of the 50S ribosomal subunit. The N-terminus interacts with L11 and the large rRNA to form the base of the stalk. The C-terminus forms an elongated spine to which L12 dimers bind in a sequential fashion forming a multimeric L10(L12)X complex.

In terms of biological role, forms part of the ribosomal stalk, playing a central role in the interaction of the ribosome with GTP-bound translation factors. This chain is Large ribosomal subunit protein uL10, found in Natranaerobius thermophilus (strain ATCC BAA-1301 / DSM 18059 / JW/NM-WN-LF).